The following is a 183-amino-acid chain: Calcineurin subunit B type 2 (183 aa).

The N-myristoyl glycine moiety is linked to residue glycine 2. EF-hand domains are found at residues 25 to 60 (REIKRLYKRFKRLDKEEKGSINVEDFNQIPELSMNP), 64 to 92 (RIISIFDVNRDGQVNFKQFVKSLSTFHPK), 94 to 129 (DKADKIKILFKVYDINNDGFITRDEIETILTMMVGS), and 135 to 170 (QISSIVEETLNEADVNGKGKLDYPDFYNSIGSSGCN). Residues aspartate 107, asparagine 109, aspartate 111, and glutamate 118 each contribute to the Ca(2+) site.

The protein belongs to the calcineurin regulatory subunit family. Calcineurin is composed of a catalytic subunit (A) and a regulatory subunit (B).

Functionally, regulatory subunit of calcineurin, a calcium-dependent, calmodulin stimulated protein phosphatase. Confers calcium sensitivity. This is Calcineurin subunit B type 2 (cnbB) from Dictyostelium discoideum (Social amoeba).